The chain runs to 201 residues: Imidazoleglycerol-phosphate dehydratase (201 aa).

Belongs to the imidazoleglycerol-phosphate dehydratase family.

Its subcellular location is the cytoplasm. The enzyme catalyses D-erythro-1-(imidazol-4-yl)glycerol 3-phosphate = 3-(imidazol-4-yl)-2-oxopropyl phosphate + H2O. Its pathway is amino-acid biosynthesis; L-histidine biosynthesis; L-histidine from 5-phospho-alpha-D-ribose 1-diphosphate: step 6/9. In Synechococcus sp. (strain CC9311), this protein is Imidazoleglycerol-phosphate dehydratase.